The chain runs to 86 residues: Cell division topological specificity factor (86 aa).

Belongs to the MinE family.

Functionally, prevents the cell division inhibition by proteins MinC and MinD at internal division sites while permitting inhibition at polar sites. This ensures cell division at the proper site by restricting the formation of a division septum at the midpoint of the long axis of the cell. This chain is Cell division topological specificity factor, found in Shewanella sediminis (strain HAW-EB3).